An 82-amino-acid polypeptide reads, in one-letter code: M-zodatoxin-Lt3a (82 aa).

The signal sequence occupies residues 1-22 (MKTYAVLLALVVAFVCIAESTG). A propeptide spanning residues 23–61 (YPVEDLEDDELTELEAEALLEDLLEDLELEDLDYNEEAR) is cleaved from the precursor. Positions 58–61 (EEAR) match the Processing quadruplet motif motif. Alanine amide is present on Ala81.

It belongs to the cationic peptide 03 (latarcin) family. 03 subfamily. In terms of processing, cleavage of the propeptide depends on the processing quadruplet motif (XXXR, with at least one of X being E). Expressed by the venom gland.

It is found in the secreted. It localises to the target cell membrane. Its function is as follows. It has antimicrobial activity against Gram-positive bacteria (A.globiformis VKM Ac-1112 (MIC=0.3 uM), and B.subtilis VKM B-501 (MIC=1.2 uM)), Gram-negative bacteria (E.coli DH5-alpha (MIC=2.5 uM), E.coli MH1 (MIC=6.0 uM), and P.aeruginosa PAO1 (MIC&gt;40 uM)), and yeasts (P.pastoris GS115 (MIC=20 uM), and S.cerevisiae Y190 (MIC=20 uM)). Causes paralysis, but is not lethal when injected into insect (M.domestica) larvae. A second study reports antibacterial activity against E.coli (MIC=100 uM) and S.aureus (MIC=84 uM). Furthermore, increases efficacy of antibiotics (chloramphenicol, streptomycin, kanamycin, novobiocin) when tested against E.coli, probably by facilitating their incorporation into the bacteria. The polypeptide is M-zodatoxin-Lt3a (Lachesana tarabaevi (Spider)).